The primary structure comprises 137 residues: MSFIKEFREFAMRGNVVDLAVGVIIGAAFGKIVSSLVADIIMPPLGLLIGGIDFKQFAFTLREAQGDIPAVVMHYGVFIQNVFDFVIVAFAIFVAIKLINRLNRKKAEEPAAPPAPSKEEVLLGEIRDLLKEQNNRS.

Helical transmembrane passes span 10-30 and 76-96; these read FAMR…AAFG and GVFI…FVAI.

This sequence belongs to the MscL family. Homopentamer.

Its subcellular location is the cell inner membrane. Channel that opens in response to stretch forces in the membrane lipid bilayer. May participate in the regulation of osmotic pressure changes within the cell. In Salmonella typhimurium (strain LT2 / SGSC1412 / ATCC 700720), this protein is Large-conductance mechanosensitive channel.